The primary structure comprises 185 residues: Ribosome-recycling factor (185 aa).

It belongs to the RRF family.

It localises to the cytoplasm. Its function is as follows. Responsible for the release of ribosomes from messenger RNA at the termination of protein biosynthesis. May increase the efficiency of translation by recycling ribosomes from one round of translation to another. This chain is Ribosome-recycling factor, found in Streptococcus pneumoniae serotype 2 (strain D39 / NCTC 7466).